The sequence spans 195 residues: Probable GTP-binding protein EngB (195 aa).

The 173-residue stretch at 22–194 (LKGEVAFVGR…LDLISTLLKE (173 aa)) folds into the EngB-type G domain. Residues 30–37 (GRSNVGKS), 56–60 (GKTRS), 74–77 (DLPG), 141–144 (TKMD), and 173–175 (TSS) each bind GTP. Mg(2+) is bound by residues serine 37 and threonine 58.

Belongs to the TRAFAC class TrmE-Era-EngA-EngB-Septin-like GTPase superfamily. EngB GTPase family. The cofactor is Mg(2+).

In terms of biological role, necessary for normal cell division and for the maintenance of normal septation. This chain is Probable GTP-binding protein EngB, found in Thermotoga maritima (strain ATCC 43589 / DSM 3109 / JCM 10099 / NBRC 100826 / MSB8).